The primary structure comprises 1169 residues: Pesticidal crystal protein Cry1Gb (1169 aa).

Belongs to the delta endotoxin family.

Promotes colloidosmotic lysis by binding to the midgut epithelial cells of lepidopteran larvae. Toxic to Pieris rapae. The chain is Pesticidal crystal protein Cry1Gb (cry1Gb) from Bacillus thuringiensis subsp. wuhanensis.